A 580-amino-acid polypeptide reads, in one-letter code: Protein O-linked-mannose beta-1,4-N-acetylglucosaminyltransferase 2 (580 aa).

The Cytoplasmic portion of the chain corresponds to 1–4 (MHLS). Residues 5 to 25 (AVFNALLVSVLAAVLWKHVRL) traverse the membrane as a helical; Signal-anchor for type II membrane protein segment. Over 26-580 (REHAATLEEE…PFADVLVCST (555 aa)) the chain is Lumenal. Residues asparagine 99 and asparagine 276 are each glycosylated (N-linked (GlcNAc...) asparagine). The Fibronectin type-III domain occupies 488–580 (ARCQASVQGA…PFADVLVCST (93 aa)).

Belongs to the glycosyltransferase 61 family. In terms of tissue distribution, mainly expressed in the central nervous system.

It is found in the endoplasmic reticulum membrane. The enzyme catalyses 3-O-(alpha-D-mannosyl)-L-threonyl-[protein] + UDP-N-acetyl-alpha-D-glucosamine = 3-O-(N-acetyl-beta-D-glucosaminyl-(1-&gt;4)-alpha-D-mannosyl)-L-threonyl-[protein] + UDP + H(+). It functions in the pathway protein modification; protein glycosylation. In terms of biological role, O-linked mannose beta-1,4-N-acetylglucosaminyltransferase that transfers UDP-N-acetyl-D-glucosamine to the 4-position of the mannose to generate N-acetyl-D-glucosamine-beta-1,4-O-D-mannosylprotein. Involved in the biosynthesis of the phosphorylated O-mannosyl trisaccharide (N-acetylgalactosamine-beta-3-N-acetylglucosamine-beta-4-(phosphate-6-)mannose), a carbohydrate structure present in alpha-dystroglycan (DAG1), which is required for binding laminin G-like domain-containing extracellular proteins with high affinity. The chain is Protein O-linked-mannose beta-1,4-N-acetylglucosaminyltransferase 2 (Pomgnt2) from Mus musculus (Mouse).